A 158-amino-acid polypeptide reads, in one-letter code: Endoribonuclease YbeY (158 aa).

3 residues coordinate Zn(2+): His-117, His-121, and His-127.

The protein belongs to the endoribonuclease YbeY family. Requires Zn(2+) as cofactor.

Its subcellular location is the cytoplasm. In terms of biological role, single strand-specific metallo-endoribonuclease involved in late-stage 70S ribosome quality control and in maturation of the 3' terminus of the 16S rRNA. This Francisella philomiragia subsp. philomiragia (strain ATCC 25017 / CCUG 19701 / FSC 153 / O#319-036) protein is Endoribonuclease YbeY.